We begin with the raw amino-acid sequence, 486 residues long: CUGBP Elav-like family member 4 (486 aa).

The tract at residues Met-1–Gln-298 is sufficient for RNA-binding and MSE-dependent splicing activity. The segment covering Leu-18 to Gly-28 has biased composition (polar residues). Disordered stretches follow at residues Leu-18 to Ser-39 and Leu-121 to Ser-149. An RRM 1 domain is found at Ile-54 to Ser-135. Residues Arg-138–Ser-149 show a composition bias toward polar residues. In terms of domain architecture, RRM 2 spans Arg-152–Thr-232. Residues Arg-239–Phe-258 are necessary for TNNT2 exon 5 inclusion. In terms of domain architecture, RRM 3 spans Pro-404–Pro-479.

The protein belongs to the CELF/BRUNOL family. Ubiquitous. Strongly expressed in the cerebellum, hippocampus, amygdala, temporal and frontal cortex and frontal lobes.

Its subcellular location is the nucleus. It localises to the cytoplasm. In terms of biological role, RNA-binding protein implicated in the regulation of pre-mRNA alternative splicing. Mediates exon inclusion and/or exclusion in pre-mRNA that are subject to tissue-specific and developmentally regulated alternative splicing. Specifically activates exon 5 inclusion of cardiac isoforms of TNNT2 during heart remodeling at the juvenile to adult transition. Promotes exclusion of both the smooth muscle (SM) and non-muscle (NM) exons in actinin pre-mRNAs. Activates the splicing of MAPT/Tau exon 10. Binds to muscle-specific splicing enhancer (MSE) intronic sites flanking the alternative exon 5 of TNNT2 pre-mRNA. The protein is CUGBP Elav-like family member 4 (CELF4) of Homo sapiens (Human).